The primary structure comprises 326 residues: Protoheme IX farnesyltransferase (326 aa).

A run of 8 helical transmembrane segments spans residues 35-55, 60-80, 106-126, 129-149, 157-177, 185-205, 242-262, and 283-303; these read LIPL…GWPL, LVCT…LNCL, SAFI…VSGV, LAAG…TALL, IVIG…AATG, WLFA…ALLL, GFGV…LLPF, and AKGL…LLIL.

It belongs to the UbiA prenyltransferase family. Protoheme IX farnesyltransferase subfamily.

Its subcellular location is the cell inner membrane. It catalyses the reaction heme b + (2E,6E)-farnesyl diphosphate + H2O = Fe(II)-heme o + diphosphate. It participates in porphyrin-containing compound metabolism; heme O biosynthesis; heme O from protoheme: step 1/1. Converts heme B (protoheme IX) to heme O by substitution of the vinyl group on carbon 2 of heme B porphyrin ring with a hydroxyethyl farnesyl side group. The protein is Protoheme IX farnesyltransferase of Parasynechococcus marenigrum (strain WH8102).